The sequence spans 597 residues: Spastin (597 aa).

The Cytoplasmic segment spans residues 1 to 20 (MPNNDILRPLAIPAKYVGSF). Positions 21–37 (LVFLYNGLYFVFVVNLW) form an intramembrane region, helical. At 38–597 (SRLFGKATKT…DWNRLYGSNA (560 aa)) the chain is on the cytoplasmic side. Residues 56 to 80 (RKLGKDMASRAPPRRGQSSEDNEDG) are disordered. The MIT domain occupies 91–168 (HHKQAYAYIA…ENTRERMDEL (78 aa)). A disordered region spans residues 193 to 289 (SARKTSSEPS…PAMMAKQSCV (97 aa)). The segment covering 214 to 231 (SYKQSKSYKNSTTVTTKR) has biased composition (polar residues). The span at 232–252 (SQASPSFSSSSSSVNSTAGSS) shows a compositional bias: low complexity.

It belongs to the AAA ATPase family. Spastin subfamily. Homohexamer. The homohexamer is stabilized by ATP-binding. The homohexamer may adopt a ring conformation through which microtubules pass prior to being severed. Interacts with microtubules.

It is found in the membrane. It localises to the cytoplasm. The protein resides in the cytoskeleton. The protein localises to the microtubule organizing center. Its subcellular location is the centrosome. The enzyme catalyses n ATP + n H2O + a microtubule = n ADP + n phosphate + (n+1) alpha/beta tubulin heterodimers.. Functionally, ATP-dependent microtubule severing protein. Microtubule severing may promote reorganization of cellular microtubule arrays and the release of microtubules from the microtubule organizing center following nucleation. This chain is Spastin, found in Nematostella vectensis (Starlet sea anemone).